Reading from the N-terminus, the 501-residue chain is UPF0288 protein Maeo_0995 (501 aa).

It belongs to the UPF0288 family.

This Methanococcus aeolicus (strain ATCC BAA-1280 / DSM 17508 / OCM 812 / Nankai-3) protein is UPF0288 protein Maeo_0995.